We begin with the raw amino-acid sequence, 295 residues long: Porphobilinogen deaminase (295 aa).

Cysteine 241 carries the post-translational modification S-(dipyrrolylmethanemethyl)cysteine.

This sequence belongs to the HMBS family. As to quaternary structure, monomer. It depends on dipyrromethane as a cofactor.

The enzyme catalyses 4 porphobilinogen + H2O = hydroxymethylbilane + 4 NH4(+). Its pathway is porphyrin-containing compound metabolism; protoporphyrin-IX biosynthesis; coproporphyrinogen-III from 5-aminolevulinate: step 2/4. Its function is as follows. Tetrapolymerization of the monopyrrole PBG into the hydroxymethylbilane pre-uroporphyrinogen in several discrete steps. This is Porphobilinogen deaminase from Lachnospira eligens (strain ATCC 27750 / DSM 3376 / VPI C15-48 / C15-B4) (Eubacterium eligens).